The primary structure comprises 592 residues: Aspartate--tRNA(Asp/Asn) ligase (592 aa).

Position 182 (Glu182) interacts with L-aspartate. An aspartate region spans residues 206 to 209 (QIFK). L-aspartate is bound at residue Arg228. ATP-binding positions include 228–230 (RDE) and Gln237. His455 serves as a coordination point for L-aspartate. Residue Glu489 coordinates ATP. An L-aspartate-binding site is contributed by Arg496. 541-544 (GLDR) contributes to the ATP binding site.

It belongs to the class-II aminoacyl-tRNA synthetase family. Type 1 subfamily. In terms of assembly, homodimer.

The protein resides in the cytoplasm. It catalyses the reaction tRNA(Asx) + L-aspartate + ATP = L-aspartyl-tRNA(Asx) + AMP + diphosphate. Functionally, aspartyl-tRNA synthetase with relaxed tRNA specificity since it is able to aspartylate not only its cognate tRNA(Asp) but also tRNA(Asn). Reaction proceeds in two steps: L-aspartate is first activated by ATP to form Asp-AMP and then transferred to the acceptor end of tRNA(Asp/Asn). In Caldanaerobacter subterraneus subsp. tengcongensis (strain DSM 15242 / JCM 11007 / NBRC 100824 / MB4) (Thermoanaerobacter tengcongensis), this protein is Aspartate--tRNA(Asp/Asn) ligase.